The sequence spans 514 residues: MSVELWQQCVDLLRDELPSQQFNTWIRPLQVEAEGDELRVYAPNRFVLDWVNEKYLGRLLELLGERGEGQLPALSLLIGSKRSRTPRAAIVPSQTHVAPPPPVAPPPAPVQPVSAAPVVVPREELPPVTTAPSVSSDPYEPEEPSIDPLAAAMPAGAAPAVRTERNVQVEGALKHTSYLNRTFTFENFVEGKSNQLARAAAWQVADNLKHGYNPLFLYGGVGLGKTHLMHAVGNHLLKKNPNAKVVYLHSERFVADMVKALQLNAINEFKRFYRSVDALLIDDIQFFARKERSQEEFFHTFNALLEGGQQVILTSDRYPKEIEGLEERLKSRFGWGLTVAVEPPELETRVAILMKKAEQAKIELPHDAAFFIAQRIRSNVRELEGALKRVIAHSHFMGRPITIELIRESLKDLLALQDKLVSIDNIQRTVAEYYKIKISDLLSKRRSRSVARPRQVAMALSKELTNHSLPEIGVAFGGRDHTTVLHACRKIAQLRESDADIREDYKNLLRTLTT.

A domain I, interacts with DnaA modulators region spans residues 1–90 (MSVELWQQCV…KRSRTPRAAI (90 aa)). The tract at residues 91 to 177 (VPSQTHVAPP…QVEGALKHTS (87 aa)) is domain II. Positions 178 to 394 (YLNRTFTFEN…GALKRVIAHS (217 aa)) are domain III, AAA+ region. Gly222, Gly224, Lys225, and Thr226 together coordinate ATP. The tract at residues 395–514 (HFMGRPITIE…YKNLLRTLTT (120 aa)) is domain IV, binds dsDNA.

This sequence belongs to the DnaA family. As to quaternary structure, oligomerizes as a right-handed, spiral filament on DNA at oriC.

Its subcellular location is the cytoplasm. In terms of biological role, plays an essential role in the initiation and regulation of chromosomal replication. ATP-DnaA binds to the origin of replication (oriC) to initiate formation of the DNA replication initiation complex once per cell cycle. Binds the DnaA box (a 9 base pair repeat at the origin) and separates the double-stranded (ds)DNA. Forms a right-handed helical filament on oriC DNA; dsDNA binds to the exterior of the filament while single-stranded (ss)DNA is stabiized in the filament's interior. The ATP-DnaA-oriC complex binds and stabilizes one strand of the AT-rich DNA unwinding element (DUE), permitting loading of DNA polymerase. After initiation quickly degrades to an ADP-DnaA complex that is not apt for DNA replication. Binds acidic phospholipids. This Pseudomonas aeruginosa (strain LESB58) protein is Chromosomal replication initiator protein DnaA.